The sequence spans 475 residues: Glycogen synthase (475 aa).

Lys15 contacts ADP-alpha-D-glucose.

It belongs to the glycosyltransferase 1 family. Bacterial/plant glycogen synthase subfamily.

It carries out the reaction [(1-&gt;4)-alpha-D-glucosyl](n) + ADP-alpha-D-glucose = [(1-&gt;4)-alpha-D-glucosyl](n+1) + ADP + H(+). The protein operates within glycan biosynthesis; glycogen biosynthesis. In terms of biological role, synthesizes alpha-1,4-glucan chains using ADP-glucose. In Chlamydia caviae (strain ATCC VR-813 / DSM 19441 / 03DC25 / GPIC) (Chlamydophila caviae), this protein is Glycogen synthase.